Consider the following 59-residue polypeptide: Small ribosomal subunit protein bS21 (59 aa).

The interval Lys-40 to Arg-59 is disordered.

It belongs to the bacterial ribosomal protein bS21 family.

The polypeptide is Small ribosomal subunit protein bS21 (Protochlamydia amoebophila (strain UWE25)).